The chain runs to 652 residues: Regulator of DNA class I crossover intermediates 1 (652 aa).

The segment at residues 1–231 (MNWVGGSRSR…TLFERLNSLG (231 aa)) is a DNA-binding region (binds DNA containing a D-loop). Disordered stretches follow at residues 363–434 (NKTS…NIPS) and 469–506 (KISLDSAQSSRSTSYSPRPTDSCFSSSSDLPSEDEDQI). The span at 377–388 (YQREYNKNERND) shows a compositional bias: basic and acidic residues. Over residues 389-401 (LSTSFENDYYPSS) the composition is skewed to polar residues. A compositionally biased stretch (basic and acidic residues) spans 402–417 (SERKEKFENDYQEKTP). Residues 473–498 (DSAQSSRSTSYSPRPTDSCFSSSSDL) are compositionally biased toward low complexity.

Interacts with MSH5. Interacts with TEX11.

The protein resides in the chromosome. Involved in recombination, probably acting by stabilizing recombination intermediates during meiotic crossover formation. Required for normal germline development and fertility. Required for meiotic progression, complete chromosomal synapsis and crossover formation. Binds double-stranded DNA. However, also binds branched DNA molecules, such as those containing a D-loop or Holliday junction structure. Probably not required for formation of DNA double-strand breaks (DSBs). Also binds RNA in an RNA structure-independent manner, with a preference for binding 3'-UTR regions of mRNAs; may stabilize bound RNAs. In Homo sapiens (Human), this protein is Regulator of DNA class I crossover intermediates 1.